We begin with the raw amino-acid sequence, 70 residues long: Beta-defensin 107A (70 aa).

An N-terminal signal peptide occupies residues 1 to 26; sequence MPGAMKIFFFIFAALILLAQIFQART. Cystine bridges form between Cys41–Cys55 and Cys45–Cys64.

The protein belongs to the beta-defensin family.

The protein resides in the secreted. In terms of biological role, has antibacterial activity. This Pan troglodytes (Chimpanzee) protein is Beta-defensin 107A (DEFB107A).